A 925-amino-acid polypeptide reads, in one-letter code: Collagen alpha-2(I) chain (925 aa).

Positions 1–925 are disordered; the sequence is SGGFDFSFLP…FGYEGDFYRA (925 aa). 2 positions are modified to 4-hydroxyproline: P10 and P13. Positions 22–34 are enriched in gly residues; that stretch reads RYYGVGLGPGPMG. The segment covering 35–74 has biased composition (low complexity); the sequence is LMGPRGPPGASGAPGPQGFQGPAGEPGEPGQTGPAGARGP. A 4-hydroxyproline mark is found at P42 and P48. K103 carries the 5-hydroxylysine; alternate modification. A glycan (O-linked (Gal...) hydroxylysine; alternate) is linked at K103. Positions 154-171 are enriched in low complexity; the sequence is DGSVGPVGPAGPIGSAGP. Residues 271–280 show a composition bias toward gly residues; the sequence is GESGGKGEPG. Positions 281-291 are enriched in low complexity; it reads SAGPQGPPGSS. Over residues 306-315 the composition is skewed to gly residues; it reads GLRGGPGSRG. 4-hydroxyproline occurs at positions 317, 332, and 335. Positions 363–379 are enriched in low complexity; it reads IDGRPGPIGPAGARGEA. Positions 423–432 are enriched in gly residues; sequence GVQGGKGEQG. Low complexity-rich tracts occupy residues 479 to 496 and 508 to 518; these read PGES…SRGP and EPGVVGAPGTA. The span at 519–528 shows a compositional bias: gly residues; it reads GPAGSGGLPG. Low complexity-rich tracts occupy residues 551 to 595 and 602 to 622; these read VGTT…PRGS and VGPA…QPGA. The span at 623–632 shows a compositional bias: basic and acidic residues; the sequence is KGERGTKGPK. Low complexity predominate over residues 640–650; it reads PTGPVGSAGPA. The span at 660 to 669 shows a compositional bias: gly residues; sequence GSRGDGGPPG. The segment covering 671 to 680 has biased composition (low complexity); the sequence is TGFPGAAGRT. Residues 696 to 718 show a composition bias toward gly residues; it reads GAAGKGDQGPVGRGETGAGGPPG. 2 stretches are compositionally biased toward low complexity: residues 719 to 753 and 761 to 771; these read FTGE…LGLP and LPGVAGAVGEP. The segment covering 772-782 has biased composition (gly residues); it reads GPLGIGPPGAR. Positions 791–806 are enriched in low complexity; it reads EPGPVGSVGPVGALGP. Over residues 816–827 the composition is skewed to basic and acidic residues; sequence RGDKGEPGEKGP. Pro residues predominate over residues 897-907; sequence PAGPPGPPGPP.

Belongs to the fibrillar collagen family. In terms of assembly, trimers of one alpha 2(I) and two alpha 1(I) chains. Interacts (via C-terminus) with TMEM131 (via PapD-L domain); the interaction is direct and is involved in assembly and TRAPPIII ER-to-Golgi transport complex-dependent secretion of collagen. Prolines at the third position of the tripeptide repeating unit (G-X-Y) are hydroxylated in some or all of the chains. As to expression, expressed in bones.

Its subcellular location is the secreted. The protein resides in the extracellular space. It is found in the extracellular matrix. Functionally, type I collagen is a member of group I collagen (fibrillar forming collagen). The sequence is that of Collagen alpha-2(I) chain from Acratocnus sp. (strain SLP-2019) (Ground sloth).